A 662-amino-acid polypeptide reads, in one-letter code: Portal protein (662 aa).

Positions 1–26 are enriched in polar residues; sequence MHRASANSPLNSVSGSMMWRNQSSGR. Positions 1–35 are disordered; the sequence is MHRASANSPLNSVSGSMMWRNQSSGRRPSKRLSDN.

The protein belongs to the herpesviridae portal protein family. As to quaternary structure, homododecamerizes. Interacts with terminase subunits TRM1 and TRM3.

Its subcellular location is the virion. The protein resides in the host nucleus. In terms of biological role, forms a portal in the viral capsid through which viral DNA is translocated during DNA packaging. Assembles as a dodecamer at a single fivefold axe of the T=16 icosahedric capsid. Binds to the molecular motor that translocates the viral DNA, termed terminase. This is Portal protein (U76) from Human herpesvirus 6B (strain Z29) (HHV-6 variant B).